The chain runs to 150 residues: S-protein homolog 24 (150 aa).

N-linked (GlcNAc...) asparagine glycosylation is present at Asn-122.

This sequence belongs to the plant self-incompatibility (S1) protein family.

Its subcellular location is the secreted. The chain is S-protein homolog 24 from Arabidopsis thaliana (Mouse-ear cress).